Here is a 196-residue protein sequence, read N- to C-terminus: Cupin-domain-containing oxidoreductase srdB (196 aa).

The 65-residue stretch at 92-156 (DFAPGCKSNM…TSDEKPARML (65 aa)) folds into the Cupin type-2 domain.

Belongs to the virC family.

Its function is as follows. Cupin-domain-containing oxidoreductase; part of the gene cluster that mediates the biosynthesis of sordarial, a salicylic aldehyde structurally related to the phytotoxin pyriculol. The most interesting aspect of this pathway is formation of an aromatic product from the highly reducing polyketide synthase srdA. SrdA synthesizes a reduced polyketide chain from one molecule of acetyl-CoA and five molecules of malonyl-CoA. The polyketide chain is then reductively released as an aldehyde. The oxidoreductases srdC, srdD and srdE then oxidize one of the hydroxy groups to facilitate the intramolecular aldol condensation, followed by dehydration to yield a salicylic aldehyde. This aldehyde can undergo facile reduction by endogenous reductases to yield the alcohol 1-hydroxy-2-hydroxymethyl-3-pent-1,3-dienylbenzene. The flavin-dependent srdI counteract against the propensity of the aldehydes to be reduced under physiological conditions and is responsible for reoxidizing 1-hydroxy-2-hydroxymethyl-3-pent-1,3-dienylbenzene back to the salicylic aldehyde. This salicylic aldehyde is then selectively epoxidized by the cupin-domain-containing oxidoreductase srdB to yield the epoxide, which can be hydrolyzed stereoselectively by the hydrolase srdG to give the final product sordarial. The chain is Cupin-domain-containing oxidoreductase srdB from Neurospora crassa (strain ATCC 24698 / 74-OR23-1A / CBS 708.71 / DSM 1257 / FGSC 987).